A 372-amino-acid polypeptide reads, in one-letter code: Cytochrome b (372 aa).

The next 4 helical transmembrane spans lie at 25 to 45 (FGSM…FLAI), 69 to 90 (WIMQ…YIHI), 105 to 125 (WFSG…GYVL), and 170 to 190 (FFAL…IHII). Heme b-binding residues include histidine 75 and histidine 89. Heme b-binding residues include histidine 174 and histidine 188. An a ubiquinone-binding site is contributed by histidine 193. The next 4 helical transmembrane spans lie at 218–238 (YKDM…LSFM), 280–300 (LGGT…PFTH), 312–332 (LAQT…WTAT), and 339–358 (FILI…IMNP).

Belongs to the cytochrome b family. The cytochrome bc1 complex contains 3 respiratory subunits (MT-CYB, CYC1 and UQCRFS1), 2 core proteins (UQCRC1 and UQCRC2) and probably 6 low-molecular weight proteins. It depends on heme b as a cofactor.

The protein resides in the mitochondrion inner membrane. Functionally, component of the ubiquinol-cytochrome c reductase complex (complex III or cytochrome b-c1 complex) that is part of the mitochondrial respiratory chain. The b-c1 complex mediates electron transfer from ubiquinol to cytochrome c. Contributes to the generation of a proton gradient across the mitochondrial membrane that is then used for ATP synthesis. The sequence is that of Cytochrome b (MT-CYB) from Sinomicrurus japonicus (Coral snake).